We begin with the raw amino-acid sequence, 490 residues long: Serine hydroxymethyltransferase, mitochondrial (490 aa).

A mitochondrion-targeting transit peptide spans 1–20; sequence MFPRASALAKCMATVHRRGL. Lysine 265 is modified (N6-(pyridoxal phosphate)lysine).

Belongs to the SHMT family. In terms of assembly, homotetramer. Interacts with NAP1. Requires pyridoxal 5'-phosphate as cofactor.

The protein localises to the mitochondrion. The catalysed reaction is (6R)-5,10-methylene-5,6,7,8-tetrahydrofolate + glycine + H2O = (6S)-5,6,7,8-tetrahydrofolate + L-serine. The protein operates within one-carbon metabolism; tetrahydrofolate interconversion. In terms of biological role, interconversion of serine and glycine. The protein is Serine hydroxymethyltransferase, mitochondrial (SHM1) of Saccharomyces cerevisiae (strain ATCC 204508 / S288c) (Baker's yeast).